Reading from the N-terminus, the 403-residue chain is S-adenosylmethionine synthase (403 aa).

His16 contributes to the ATP binding site. Asp18 is a Mg(2+) binding site. Glu44 contacts K(+). 2 residues coordinate L-methionine: Glu57 and Gln110. The flexible loop stretch occupies residues 110 to 120 (QSAHIAQGVDA). Residues 175–177 (DSK), Asp253, 259–260 (RK), Ala276, and Lys280 each bind ATP. Residue Asp253 coordinates L-methionine. An L-methionine-binding site is contributed by Lys284.

Belongs to the AdoMet synthase family. As to quaternary structure, homotetramer; dimer of dimers. The cofactor is Mg(2+). It depends on K(+) as a cofactor.

The protein localises to the cytoplasm. The enzyme catalyses L-methionine + ATP + H2O = S-adenosyl-L-methionine + phosphate + diphosphate. It functions in the pathway amino-acid biosynthesis; S-adenosyl-L-methionine biosynthesis; S-adenosyl-L-methionine from L-methionine: step 1/1. Its function is as follows. Catalyzes the formation of S-adenosylmethionine (AdoMet) from methionine and ATP. The overall synthetic reaction is composed of two sequential steps, AdoMet formation and the subsequent tripolyphosphate hydrolysis which occurs prior to release of AdoMet from the enzyme. This chain is S-adenosylmethionine synthase, found in Erythrobacter litoralis (strain HTCC2594).